Here is a 180-residue protein sequence, read N- to C-terminus: GTP cyclohydrolase 1 (180 aa).

Positions 71, 74, and 142 each coordinate Zn(2+).

Belongs to the GTP cyclohydrolase I family. In terms of assembly, toroid-shaped homodecamer, composed of two pentamers of five dimers.

The catalysed reaction is GTP + H2O = 7,8-dihydroneopterin 3'-triphosphate + formate + H(+). It functions in the pathway cofactor biosynthesis; 7,8-dihydroneopterin triphosphate biosynthesis; 7,8-dihydroneopterin triphosphate from GTP: step 1/1. The chain is GTP cyclohydrolase 1 (folE) from Helicobacter pylori (strain J99 / ATCC 700824) (Campylobacter pylori J99).